A 356-amino-acid chain; its full sequence is Arginine kinase Scy s 2 (356 aa).

Positions 9–91 constitute a Phosphagen kinase N-terminal domain; it reads KLEEGFKKLE…FDPIIEDYHK (83 aa). Position 64 to 68 (64 to 68) interacts with L-arginine; that stretch reads GVGVY. In terms of domain architecture, Phosphagen kinase C-terminal spans 119 to 356; that stretch reads FVISTRVRCG…LELIKMEKEM (238 aa). ATP contacts are provided by residues 122–126 and His-185; that span reads STRVR. Glu-225 lines the L-arginine pocket. Position 229 (Arg-229) interacts with ATP. Cys-271 is an L-arginine binding site. Residues 280-284 and 309-314 each bind ATP; these read RASVH and RGTRGE. Glu-314 contributes to the L-arginine binding site.

The protein belongs to the ATP:guanido phosphotransferase family. Muscle (at protein level).

The enzyme catalyses L-arginine + ATP = N(omega)-phospho-L-arginine + ADP + H(+). Catalyzes the reversible transfer of high energy ATP gamma-phosphate group to L-arginine. This is Arginine kinase Scy s 2 from Scylla serrata (Mud crab).